The chain runs to 188 residues: Inosine triphosphate pyrophosphatase (188 aa).

An ITP-binding site is contributed by 9 to 14 (TGNAKK). Glu39 is a binding site for Mg(2+). Residues Lys51, 67-68 (DT), Lys84, 143-146 (FGWD), Lys166, and 171-172 (HR) contribute to the ITP site.

Belongs to the HAM1 NTPase family. As to quaternary structure, homodimer. It depends on Mg(2+) as a cofactor. The cofactor is Mn(2+).

It is found in the cytoplasm. The catalysed reaction is ITP + H2O = IMP + diphosphate + H(+). It catalyses the reaction dITP + H2O = dIMP + diphosphate + H(+). The enzyme catalyses XTP + H2O = XMP + diphosphate + H(+). Functionally, pyrophosphatase that hydrolyzes non-canonical purine nucleotides such as inosine triphosphate (ITP), deoxyinosine triphosphate (dITP) or xanthosine 5'-triphosphate (XTP) to their respective monophosphate derivatives. The enzyme does not distinguish between the deoxy- and ribose forms. Probably excludes non-canonical purines from RNA and DNA precursor pools, thus preventing their incorporation into RNA and DNA and avoiding chromosomal lesions. The sequence is that of Inosine triphosphate pyrophosphatase from Aedes aegypti (Yellowfever mosquito).